The chain runs to 402 residues: Propionate kinase (402 aa).

Residues N11 and K18 each contribute to the ATP site. Position 11 (N11) interacts with Mg(2+). R86 serves as a coordination point for substrate. The active-site Proton donor/acceptor is the D143. Residues H175, 203 to 207 (HLGNG), 278 to 280 (DLR), and 326 to 330 (GIGEN) contribute to the ATP site.

The protein belongs to the acetokinase family. TdcD subfamily. Homodimer. It depends on Mg(2+) as a cofactor.

It carries out the reaction propanoate + ATP = propanoyl phosphate + ADP. It participates in amino-acid degradation; L-threonine degradation via propanoate pathway; propanoate from L-threonine: step 4/4. Catalyzes the conversion of propionyl phosphate and ADP to propionate and ATP. This is Propionate kinase from Salmonella agona (strain SL483).